A 398-amino-acid polypeptide reads, in one-letter code: Thyrotropin-releasing hormone receptor (398 aa).

Residues 1-28 lie on the Extracellular side of the membrane; it reads MENETVSELNQTQLQPRAVVALEYQVVT. 2 N-linked (GlcNAc...) asparagine glycosylation sites follow: Asn-3 and Asn-10. The helical transmembrane segment at 29–51 threads the bilayer; the sequence is ILLVLIICGLGIVGNIMVVLVVM. Residues 52–61 are Cytoplasmic-facing; it reads RTKHMRTPTN. The helical transmembrane segment at 62 to 83 threads the bilayer; sequence CYLVSLAVADLMVLVAAGLPNI. Topologically, residues 84 to 99 are extracellular; the sequence is TDSIYGSWVYGYVGCL. A disulfide bond links Cys-98 and Cys-179. Residues 100-121 traverse the membrane as a helical segment; sequence CITYLQYLGINASSCSITAFTI. At 122-144 the chain is on the cytoplasmic side; the sequence is ERYIAICHPIKAQFLCTFSRAKK. Residues 145-168 form a helical membrane-spanning segment; the sequence is IIIFVWAFTSLYCMLWFFLLDLNI. Over 169–193 the chain is Extracellular; sequence STYKDAIVISCGYKISRNYYSPIYL. A helical membrane pass occupies residues 194 to 215; sequence MDFGVFYVVPMILATVLYGFIA. Topologically, residues 216–266 are cytoplasmic; the sequence is RILFLNPIPSDPKENSKTWKNDSTHQNTNLNVNTSNRCFNSTVSSRKQVTK. The chain crosses the membrane as a helical span at residues 267–288; the sequence is MLAVVVILFALLWMPYRTLVVV. The Extracellular segment spans residues 289–296; that stretch reads NSFLSSPF. Residues 297–319 form a helical membrane-spanning segment; the sequence is QENWFLLFCRICIYLNSAINPVI. Residues 320-398 lie on the Cytoplasmic side of the membrane; sequence YNLMSQKFRA…LASEVSFSQS (79 aa).

The protein belongs to the G-protein coupled receptor 1 family.

The protein localises to the cell membrane. Functionally, receptor for thyrotropin-releasing hormone (TRH). Upon ligand binding, this G-protein-coupled receptor triggers activation of the phosphatidylinositol (IP3)-calcium-protein kinase C (PKC) pathway. The sequence is that of Thyrotropin-releasing hormone receptor (TRHR) from Homo sapiens (Human).